A 296-amino-acid chain; its full sequence is MIYLHAIDPIAFSLGPVQVHWYGLMYLAAFFSAWALGRSRILRGRLPGVDMDGFSDLLFYGMLGVVLGGRIGYMLFYAFETFLANPLILFKVWEGGMSFHGGLLGVLIACWLWARKHRLHFFDVMDFVAPLVPLGLGFGRLGNFVGGELWGKFTQAGWGVIFPHAPELADRLPAQIQAQYAAGALNQFARHPSQLYEAALEGVVMFVVLWTFSMKPRARYAVSGLFALLYGVFRFIVEFVRVPDAPIGYLAFNWLTMGQILSLPLVAVGLVLLAMSRRAPVLQPVLPVPAGVEAAK.

Helical transmembrane passes span 10–30 (IAFSLGPVQVHWYGLMYLAAF), 57–77 (LLFYGMLGVVLGGRIGYMLFY), 92–112 (VWEGGMSFHGGLLGVLIACWL), and 119–139 (LHFFDVMDFVAPLVPLGLGFG). Arginine 140 is a binding site for a 1,2-diacyl-sn-glycero-3-phospho-(1'-sn-glycerol). The next 3 membrane-spanning stretches (helical) occupy residues 194-214 (QLYEAALEGVVMFVVLWTFSM), 220-240 (YAVSGLFALLYGVFRFIVEFV), and 254-274 (WLTMGQILSLPLVAVGLVLLA).

The protein belongs to the Lgt family.

Its subcellular location is the cell inner membrane. It catalyses the reaction L-cysteinyl-[prolipoprotein] + a 1,2-diacyl-sn-glycero-3-phospho-(1'-sn-glycerol) = an S-1,2-diacyl-sn-glyceryl-L-cysteinyl-[prolipoprotein] + sn-glycerol 1-phosphate + H(+). It functions in the pathway protein modification; lipoprotein biosynthesis (diacylglyceryl transfer). Functionally, catalyzes the transfer of the diacylglyceryl group from phosphatidylglycerol to the sulfhydryl group of the N-terminal cysteine of a prolipoprotein, the first step in the formation of mature lipoproteins. The sequence is that of Phosphatidylglycerol--prolipoprotein diacylglyceryl transferase from Xanthomonas axonopodis pv. citri (strain 306).